The primary structure comprises 1381 residues: MASITFRTPLSSQEQAFYNQKFHQLDTEDLGVVTGEAVRPLFASSGLPGQLLSQVWATVDIDNKGFLNLNEFSAALRMIAQLQNAPNQPISAALYESTPTQLASFSINQNPAPMQSGSATGNTNNTDIPALSSNDIAKFSQLFDRTAKGAQTVAGDKAKDIFLKARLPNQTLGEIWALCDRDASGVLDKSEFIMAMYLIQLCMSHHPSMNTPPAVLPTQLWDSIRLEPVVVNQPNRTTPLSANSTGVSSLTRHSTISRLSTGAFSNAASDWSLSFEKKQQFDAIFDSLDKQHAGSLSSAVLVPFFLSSRLNQETLATIWDLADIHNNAEFTKLEFAIAMFLIQKKNAGVELPDVIPNELLQSPALGLYPPNPLPQQQSAPQIAIPSRASKPSLQDMPHQVSAPAVNTQPTVPQVLPQNSNNGSLNDLLALNPSFSSPSPTKAQTVVQNNTNNSFSYDNNNGQATLQQQQPQQPPPLTHSSSGLKKFTPTSNFGQSIIKEEPEEQEQLRESSDTFSAQPPPVPKHASSPVKRTASTTLPQVPNFSVFSMPAGAATSAATGAAVGAAVGAAALGASAFSRSSNNAFKNQDLFADGEASAQLSNATTEMANLSNQVNSLSKQASITNDKKSRATQELKRVTEMKNSIQIKLNNLRSTHDQNVKQTEQLEAQVLQVNKENETLAQQLAVSEANYHAAESKLNELTTDLQESQTKNAELKEQITNLNSMTASLQSQLNEKQQQVKQERSMVDVNSKQLELNQVTVANLQKEIDGLGEKISVYLTKQKELNDYQKTVEEQHAQLQAKYQDLSNKDTDLTDREKQLEERNRQIEEQENLYHQHVSKLQEMFDDLSQRKASFEKADQELKERNIEYANNVRELSERQMNLAMGQLPEDAKDIIAKSASNTDTTTKEATSRGNVHEDTVSKFVETTVENSNLNVNRVKDDEEKTERTESDVFDRDVPTLGSQSDSENANTNNGTQSGNETANPNLTETLSDRFDGDLNEYGIPRSQSLTSSVANNAPQSVRDDVELPETLEERDTINNTANRDNTGNLSHIPGEWEATPATASTDVLSNETTEVIEDGSTTKRANSNEDGESVSSIQESPKISAQPKAKTINEEFPPIQELHIDESDSSSSDDDEFEDTREIPSATVKTLQTPYNAQPTSSLEIHTEQVIKYPAPGTSPSHNEGNSKKASTNSILPVKDEFDDEFAGLEQAAVEEDNGADSESEFENVANAGSMEQFETIDHKDLDDELQMNAFTGTLTSSSNPTIPKPQVQQQSTSDPAQVSNDEWDEIFAGFGNSKAEPTKVATPSIPQQPIPLKNDPIVDASLSKGPIVNRGVATTPKSLAVEELSGMGFTEEEAHNALEKCNWDLEAATNFLLDSA.

EH domains lie at 14–113 (EQAF…NPAP) and 135–227 (DIAK…IRLE). EF-hand domains lie at 47 to 82 (LPGQLLSQVWATVDIDNKGFLNLNEFSAALRMIAQL) and 167 to 202 (LPNQTLGEIWALCDRDASGVLDKSEFIMAMYLIQLC). Ca(2+)-binding residues include Asp180, Asp182, Ser184, and Glu191. Thr238 carries the phosphothreonine modification. 2 positions are modified to phosphoserine: Ser241 and Ser244. The residue at position 245 (Thr245) is a Phosphothreonine. Residues Ser248 and Ser249 each carry the phosphoserine modification. Thr251 is modified (phosphothreonine). Ser265 is subject to Phosphoserine. The 36-residue stretch at 276-311 (EKKQQFDAIFDSLDKQHAGSLSSAVLVPFFLSSRLN) folds into the EF-hand 3 domain. An EH 3 domain is found at 277 to 366 (KKQQFDAIFD…NELLQSPALG (90 aa)). A disordered region spans residues 389 to 535 (SKPSLQDMPH…SSPVKRTAST (147 aa)). 2 stretches are compositionally biased toward polar residues: residues 404–424 (AVNTQPTVPQVLPQNSNNGSL) and 432–447 (PSFSSPSPTKAQTVVQ). Ser419 is subject to Phosphoserine. The segment covering 448 to 470 (NNTNNSFSYDNNNGQATLQQQQP) has biased composition (low complexity). 3 positions are modified to phosphothreonine: Thr450, Thr477, and Thr487. Residues 477-494 (THSSSGLKKFTPTSNFGQ) show a composition bias toward polar residues. Ser495 is subject to Phosphoserine. The stretch at 593–882 (GEASAQLSNA…RELSERQMNL (290 aa)) forms a coiled coil. Lys674 participates in a covalent cross-link: Glycyl lysine isopeptide (Lys-Gly) (interchain with G-Cter in ubiquitin). The residue at position 848 (Ser848) is a Phosphoserine. The tract at residues 898 to 919 (SASNTDTTTKEATSRGNVHEDT) is disordered. Residues 905–919 (TTKEATSRGNVHEDT) show a composition bias toward basic and acidic residues. 6 positions are modified to phosphoserine: Ser931, Ser950, Ser964, Ser1008, Ser1012, and Ser1020. 3 disordered regions span residues 933 to 1202 (LNVN…KDEF), 1214 to 1285 (VEED…QVSN), and 1298 to 1322 (SKAEPTKVATPSIPQQPIPLKNDPI). Over residues 937–957 (RVKDDEEKTERTESDVFDRDV) the composition is skewed to basic and acidic residues. Polar residues-rich tracts occupy residues 960–989 (LGSQSDSENANTNNGTQSGNETANPNLTET) and 1005–1019 (RSQSLTSSVANNAPQ). The span at 1021–1036 (VRDDVELPETLEERDT) shows a compositional bias: basic and acidic residues. Polar residues-rich tracts occupy residues 1037-1049 (INNTANRDNTGNL) and 1061-1073 (ATASTDVLSNETT). Thr1046 carries the post-translational modification Phosphothreonine. Phosphoserine is present on residues Ser1069, Ser1087, Ser1093, Ser1095, Ser1096, and Ser1100. Over residues 1093 to 1103 (SVSSIQESPKI) the composition is skewed to polar residues. At Thr1111 the chain carries Phosphothreonine. Residues 1127-1139 (SDSSSSDDDEFED) are compositionally biased toward acidic residues. 2 stretches are compositionally biased toward polar residues: residues 1147–1164 (TVKTLQTPYNAQPTSSLE) and 1178–1195 (TSPSHNEGNSKKASTNSI). A phosphoserine mark is found at Ser1181 and Ser1187. Over residues 1214-1226 (VEEDNGADSESEF) the composition is skewed to acidic residues. The interval 1217 to 1381 (DNGADSESEF…AATNFLLDSA (165 aa)) is able to bind biological membranes. The span at 1253 to 1285 (NAFTGTLTSSSNPTIPKPQVQQQSTSDPAQVSN) shows a compositional bias: polar residues. Thr1307 bears the Phosphothreonine mark. Lys1329 is covalently cross-linked (Glycyl lysine isopeptide (Lys-Gly) (interchain with G-Cter in ubiquitin)). The 43-residue stretch at 1338–1380 (ATTPKSLAVEELSGMGFTEEEAHNALEKCNWDLEAATNFLLDS) folds into the UBA domain. The residue at position 1343 (Ser1343) is a Phosphoserine.

Belongs to the VDP/USO1/EDE1 family. As to quaternary structure, interacts (via UBA domain) with monoubiquitin and ENT1 (via asparagine-proline-phenylalanine tripeptide motif called NPF). Interacts with PAL1 and SYP1.

The protein localises to the cytoplasm. Functionally, functions at the internalization step of the clathrin-mediated endocytosis (CME) as an early-acting scaffold protein. Requires clathrin adapter proteins, ENT1/2 and YAP1801/2, for normal spatiotemporal dynamics and viability. Binds to biological membranes in a ubiquitin-dependent manner. This chain is EH domain-containing and endocytosis protein 1 (EDE1), found in Saccharomyces cerevisiae (strain ATCC 204508 / S288c) (Baker's yeast).